The chain runs to 558 residues: NAD-dependent malic enzyme 2 (558 aa).

Tyr101 (proton donor) is an active-site residue. Arg154 is an NAD(+) binding site. Catalysis depends on Lys172, which acts as the Proton acceptor. Residues Glu243, Asp244, and Asp267 each contribute to the a divalent metal cation site. The NAD(+) site is built by Asp267 and Asn411.

The protein belongs to the malic enzymes family. As to quaternary structure, homotetramer. It depends on Mg(2+) as a cofactor. Mn(2+) is required as a cofactor.

It catalyses the reaction (S)-malate + NAD(+) = pyruvate + CO2 + NADH. The enzyme catalyses oxaloacetate + H(+) = pyruvate + CO2. This chain is NAD-dependent malic enzyme 2, found in Photobacterium profundum (strain SS9).